We begin with the raw amino-acid sequence, 93 residues long: Aspartyl/glutamyl-tRNA(Asn/Gln) amidotransferase subunit C (93 aa).

It belongs to the GatC family. Heterotrimer of A, B and C subunits.

The enzyme catalyses L-glutamyl-tRNA(Gln) + L-glutamine + ATP + H2O = L-glutaminyl-tRNA(Gln) + L-glutamate + ADP + phosphate + H(+). The catalysed reaction is L-aspartyl-tRNA(Asn) + L-glutamine + ATP + H2O = L-asparaginyl-tRNA(Asn) + L-glutamate + ADP + phosphate + 2 H(+). In terms of biological role, allows the formation of correctly charged Asn-tRNA(Asn) or Gln-tRNA(Gln) through the transamidation of misacylated Asp-tRNA(Asn) or Glu-tRNA(Gln) in organisms which lack either or both of asparaginyl-tRNA or glutaminyl-tRNA synthetases. The reaction takes place in the presence of glutamine and ATP through an activated phospho-Asp-tRNA(Asn) or phospho-Glu-tRNA(Gln). The sequence is that of Aspartyl/glutamyl-tRNA(Asn/Gln) amidotransferase subunit C from Rubrobacter xylanophilus (strain DSM 9941 / JCM 11954 / NBRC 16129 / PRD-1).